A 361-amino-acid chain; its full sequence is DNA replication and repair protein RecF (361 aa).

Residue 30 to 37 participates in ATP binding; that stretch reads GANGSGKT.

It belongs to the RecF family.

The protein resides in the cytoplasm. In terms of biological role, the RecF protein is involved in DNA metabolism; it is required for DNA replication and normal SOS inducibility. RecF binds preferentially to single-stranded, linear DNA. It also seems to bind ATP. This Glaesserella parasuis serovar 5 (strain SH0165) (Haemophilus parasuis) protein is DNA replication and repair protein RecF.